The following is a 138-amino-acid chain: Cysteine desulfuration protein SufE (138 aa).

Catalysis depends on Cys-51, which acts as the Cysteine persulfide intermediate.

This sequence belongs to the SufE family. As to quaternary structure, homodimer. Interacts with SufS.

It is found in the cytoplasm. It participates in cofactor biosynthesis; iron-sulfur cluster biosynthesis. In terms of biological role, participates in cysteine desulfuration mediated by SufS. Cysteine desulfuration mobilizes sulfur from L-cysteine to yield L-alanine and constitutes an essential step in sulfur metabolism for biosynthesis of a variety of sulfur-containing biomolecules. Functions as a sulfur acceptor for SufS, by mediating the direct transfer of the sulfur atom from the S-sulfanylcysteine of SufS, an intermediate product of cysteine desulfuration process. This Escherichia coli (strain K12 / MC4100 / BW2952) protein is Cysteine desulfuration protein SufE.